Reading from the N-terminus, the 208-residue chain is Sodium/potassium-transporting ATPase subunit beta-1-interacting protein 2 (208 aa).

4 helical membrane passes run Met1 to Glu23, Ala35 to Ile55, Ile62 to Phe82, and Leu153 to Thr173.

The protein belongs to the NKAIN family. As to quaternary structure, interacts with ATP1B1. As to expression, expressed in fetal brain. Weakly expressed in adult brain and thymus. Not expressed in any other normal tissue examined.

It is found in the cell membrane. The sequence is that of Sodium/potassium-transporting ATPase subunit beta-1-interacting protein 2 (NKAIN2) from Homo sapiens (Human).